The following is a 742-amino-acid chain: Collectin-12 (742 aa).

Residues 1–37 (MKDDFAEEEEVQSFGYKRFGIQEGTQCTKCKNNWALK) are Cytoplasmic-facing. The chain crosses the membrane as a helical; Signal-anchor for type II membrane protein span at residues 38-58 (FSIILLYILCVLLTITIAILG). The Extracellular segment spans residues 59–742 (YKVVEKMDNV…DMDKEQIFGV (684 aa)). Coiled coils occupy residues 71-101 (GLETSHRRYTEKLTEVESDLKKLDDQAGQKA) and 271-334 (NNSA…QLEE). The tract at residues 439 to 605 (TILQGPPGPR…SEPTSVPEAN (167 aa)) is disordered. 2 Collagen-like domains span residues 467–526 (GQKG…SGDP) and 527–586 (GPPG…PGPP). A compositionally biased stretch (pro residues) spans 475–492 (PGPPGPAGEKGPPGPIGP). 2 stretches are compositionally biased toward low complexity: residues 502–522 (RGSPGSKGQRGSPGKTGLPGP) and 532–556 (QGKDGPQGPQGPPGFQGLQGTVGEP). The span at 571 to 589 (PGLPGPKGPPGPPGPPGPG) shows a compositional bias: pro residues. Cystine bridges form between Cys607/Cys618, Cys635/Cys730, and Cys708/Cys722. The C-type lectin domain occupies 614 to 731 (YTEKCYYFSI…CEDVNNFICE (118 aa)). Residues Ile644, Asn646, Glu650, Asp670, and Glu674 each coordinate Ca(2+). 3 residues coordinate a carbohydrate: Lys691, Gln694, and Asp696. Ca(2+) is bound by residues Gln694, Asp696, Asn697, Glu706, Asp707, Asn718, Asp719, and Glu731. An a carbohydrate-binding site is contributed by Glu706. A carbohydrate is bound by residues Asn718 and Asp719.

As to expression, widely expressed.

It is found in the membrane. In terms of biological role, scavenger receptor that displays several functions associated with host defense. Binds to carbohydrates. In Gallus gallus (Chicken), this protein is Collectin-12 (COLEC12).